Here is a 517-residue protein sequence, read N- to C-terminus: N-acetylglucosamine-1-phosphodiester alpha-N-acetylglucosaminidase (517 aa).

The first 25 residues, methionine 1–serine 25, serve as a signal peptide directing secretion. Positions leucine 26–arginine 49 are cleaved as a propeptide — removed in mature form. A disordered region spans residues arginine 49–histidine 75. Over aspartate 50–alanine 453 the chain is Lumenal. 5 disulfide bridges follow: cysteine 116–cysteine 149, cysteine 133–cysteine 324, cysteine 308–cysteine 315, cysteine 363–cysteine 374, and cysteine 381–cysteine 390. N-linked (GlcNAc...) asparagine glycosylation is found at asparagine 215 and asparagine 297. The EGF-like domain maps to serine 359 to serine 391. Asparagine 367, asparagine 389, and asparagine 421 each carry an N-linked (GlcNAc...) asparagine glycan. The chain crosses the membrane as a helical span at residues leucine 454–leucine 474. Over glycine 475–aspartate 517 the chain is Cytoplasmic. The short motif at tyrosine 488–histidine 491 is the Tyrosine-based internalization motif element. The tract at residues tyrosine 488–glutamate 495 is mediates the interaction with AP4M1. The NPF internalization motif motif lies at threonine 511 to phenylalanine 515.

Homotetramer arranged as two disulfide-linked homodimers. Interacts with AP4M1. The precursor is cleaved and activated in the trans-Golgi network by a furin endopeptidase.

Its subcellular location is the golgi apparatus. The protein localises to the golgi stack membrane. It localises to the trans-Golgi network. The enzyme catalyses N(4)-[6-(N-acetyl-alpha-D-glucosaminyl-1-phospho)-alpha-D-mannosyl-(1-&gt;2)-alpha-D-mannosyl-(glycan)]-L-asparaginyl-[protein] + H2O = N(4)-[6-phospho-alpha-D-mannosyl-(1-&gt;2)-alpha-D-mannosyl-(glycan)]-L-asparaginyl-[protein] + N-acetyl-D-glucosamine + H(+). It participates in protein modification; protein glycosylation. Catalyzes the second step in the formation of the mannose 6-phosphate targeting signal on lysosomal enzyme oligosaccharides by removing GlcNAc residues from GlcNAc-alpha-P-mannose moieties, which are formed in the first step. Also hydrolyzes UDP-GlcNAc, a sugar donor for Golgi N-acetylglucosaminyltransferases. The protein is N-acetylglucosamine-1-phosphodiester alpha-N-acetylglucosaminidase (Nagpa) of Mus musculus (Mouse).